Reading from the N-terminus, the 270-residue chain is Fructose-2,6-bisphosphatase TIGAR (270 aa).

His11 (tele-phosphohistidine intermediate) is an active-site residue. Lys50 is modified (N6-acetyllysine). Glu89 (proton donor/acceptor) is an active-site residue.

The protein belongs to the phosphoglycerate mutase family. Interacts with HK2; the interaction increases hexokinase HK2 activity in a hypoxia- and HIF1A-dependent manner, resulting in the regulation of mitochondrial membrane potential, thus increasing NADPH production and decreasing intracellular ROS levels.

It is found in the cytoplasm. Its subcellular location is the nucleus. The protein resides in the mitochondrion. The catalysed reaction is beta-D-fructose 2,6-bisphosphate + H2O = beta-D-fructose 6-phosphate + phosphate. Functionally, fructose-bisphosphatase hydrolyzing fructose-2,6-bisphosphate as well as fructose-1,6-bisphosphate. Acts as a negative regulator of glycolysis by lowering intracellular levels of fructose-2,6-bisphosphate in a p53/TP53-dependent manner, resulting in the pentose phosphate pathway (PPP) activation and NADPH production. Contributes to the generation of reduced glutathione to cause a decrease in intracellular reactive oxygen species (ROS) content, correlating with its ability to protect cells from oxidative or metabolic stress-induced cell death. Plays a role in promoting protection against cell death during hypoxia by decreasing mitochondria ROS levels in a HK2-dependent manner through a mechanism that is independent of its fructose-bisphosphatase activity. In response to cardiac damage stress, mediates p53-induced inhibition of myocyte mitophagy through ROS levels reduction and the subsequent inactivation of BNIP3. Reduced mitophagy results in an enhanced apoptotic myocyte cell death, and exacerbates cardiac damage. Plays a role in adult intestinal regeneration; contributes to the growth, proliferation and survival of intestinal crypts following tissue ablation. Plays a neuroprotective role against ischemic brain damage by enhancing PPP flux and preserving mitochondria functions. Protects glioma cells from hypoxia- and ROS-induced cell death by inhibiting glycolysis and activating mitochondrial energy metabolism and oxygen consumption in a TKTL1-dependent and p53/TP53-independent manner. Plays a role in cancer cell survival by promoting DNA repair through activating PPP flux in a CDK5-ATM-dependent signaling pathway during hypoxia and/or genome stress-induced DNA damage responses. Involved in intestinal tumor progression. This chain is Fructose-2,6-bisphosphatase TIGAR, found in Bos taurus (Bovine).